Consider the following 230-residue polypeptide: Sugar fermentation stimulation protein homolog (230 aa).

The protein belongs to the SfsA family.

The protein is Sugar fermentation stimulation protein homolog of Clostridium perfringens (strain ATCC 13124 / DSM 756 / JCM 1290 / NCIMB 6125 / NCTC 8237 / Type A).